The sequence spans 22 residues: MSKRAMKKIIPLITLFVVTLVG.

The propeptide occupies 1–14 (MSKRAMKKIIPLIT).

Its subcellular location is the secreted. Its function is as follows. Acts as a competitive inhibitor of the CAD1 pheromone. The chain is Sex pheromone inhibitor determinant (iad) from Enterococcus faecalis (strain ATCC 700802 / V583).